Consider the following 166-residue polypeptide: Large ribosomal subunit protein mL49 (166 aa).

The disordered stretch occupies residues 56–78 (RIPDPPKHEHYPTPSGWQPPRDP).

This sequence belongs to the mitochondrion-specific ribosomal protein mL49 family. Component of the mitochondrial large ribosomal subunit (mt-LSU). Mature mammalian 55S mitochondrial ribosomes consist of a small (28S) and a large (39S) subunit. The 28S small subunit contains a 12S ribosomal RNA (12S mt-rRNA) and 30 different proteins. The 39S large subunit contains a 16S rRNA (16S mt-rRNA), a copy of mitochondrial valine transfer RNA (mt-tRNA(Val)), which plays an integral structural role, and 52 different proteins. Interacts with OXA1L. As to expression, ubiquitous.

It is found in the mitochondrion. This Homo sapiens (Human) protein is Large ribosomal subunit protein mL49 (MRPL49).